A 157-amino-acid chain; its full sequence is 2-C-methyl-D-erythritol 2,4-cyclodiphosphate synthase (157 aa).

A divalent metal cation is bound by residues Asp-8 and His-10. Residues 8-10 and 34-35 contribute to the 4-CDP-2-C-methyl-D-erythritol 2-phosphate site; these read DVH and HS. A divalent metal cation is bound at residue His-42. 4-CDP-2-C-methyl-D-erythritol 2-phosphate-binding positions include 56–58, 61–65, 100–106, 132–135, Phe-139, and Arg-142; these read DIG, FPDTD, AQAPKMA, and TTEE.

The protein belongs to the IspF family. Homotrimer. A divalent metal cation serves as cofactor.

It carries out the reaction 4-CDP-2-C-methyl-D-erythritol 2-phosphate = 2-C-methyl-D-erythritol 2,4-cyclic diphosphate + CMP. Its pathway is isoprenoid biosynthesis; isopentenyl diphosphate biosynthesis via DXP pathway; isopentenyl diphosphate from 1-deoxy-D-xylulose 5-phosphate: step 4/6. In terms of biological role, involved in the biosynthesis of isopentenyl diphosphate (IPP) and dimethylallyl diphosphate (DMAPP), two major building blocks of isoprenoid compounds. Catalyzes the conversion of 4-diphosphocytidyl-2-C-methyl-D-erythritol 2-phosphate (CDP-ME2P) to 2-C-methyl-D-erythritol 2,4-cyclodiphosphate (ME-CPP) with a corresponding release of cytidine 5-monophosphate (CMP). This Pseudomonas entomophila (strain L48) protein is 2-C-methyl-D-erythritol 2,4-cyclodiphosphate synthase.